A 506-amino-acid polypeptide reads, in one-letter code: Secreted RxLR effector protein 134 (506 aa).

The N-terminal stretch at 1–19 (MQGAYCVAVALLIAASGQA) is a signal peptide. The short motif at 50–71 (RVLQVSHYPKDDLMLLAGNEER) is the RxLR-dEER element.

It belongs to the RxLR effector family.

Its subcellular location is the secreted. It is found in the host nucleus. Secreted effector that completely suppresses the host cell death induced by cell death-inducing proteins. In Plasmopara viticola (Downy mildew of grapevine), this protein is Secreted RxLR effector protein 134.